Reading from the N-terminus, the 339-residue chain is Methionine synthase (339 aa).

Zn(2+) contacts are provided by His-212, Cys-214, and Cys-295.

It belongs to the archaeal MetE family. Zn(2+) serves as cofactor.

The protein operates within amino-acid biosynthesis; L-methionine biosynthesis via de novo pathway. In terms of biological role, catalyzes the transfer of a methyl group to L-homocysteine resulting in methionine formation. The physiological methyl donor is unknown. The protein is Methionine synthase of Sulfolobus acidocaldarius (strain ATCC 33909 / DSM 639 / JCM 8929 / NBRC 15157 / NCIMB 11770).